Here is a 280-residue protein sequence, read N- to C-terminus: Lacto-N-neotetraose biosynthesis glycosyltransferase LgtE (280 aa).

It belongs to the glycosyltransferase 25 family.

The protein operates within glycan metabolism; lacto-N-neotetraose biosynthesis. It functions in the pathway bacterial outer membrane biogenesis; lipooligosaccharide biosynthesis. Functionally, adds the first galactose to the lacto-N-tetraose chain in lipooligosaccharide (LOS). The chain is Lacto-N-neotetraose biosynthesis glycosyltransferase LgtE (lgtE) from Neisseria gonorrhoeae.